We begin with the raw amino-acid sequence, 178 residues long: uncharacterized protein (178 aa).

Residues 1–23 (MNYSVIWAITILILGLVLTLAWA) form the signal peptide.

This is an uncharacterized protein from Invertebrate iridescent virus 3 (IIV-3).